We begin with the raw amino-acid sequence, 61 residues long: MAQKQIKVTLVRSVIGTKQSHRDTIRGLGLRRINSSRVLVDTPEVRGMIHKVGYLVSVSEA.

This sequence belongs to the universal ribosomal protein uL30 family. As to quaternary structure, part of the 50S ribosomal subunit.

The polypeptide is Large ribosomal subunit protein uL30 (Bordetella parapertussis (strain 12822 / ATCC BAA-587 / NCTC 13253)).